A 207-amino-acid chain; its full sequence is Ras-related protein Rab-8B (207 aa).

10 residues coordinate GTP: serine 17, glycine 18, valine 19, glycine 20, lysine 21, threonine 22, cysteine 23, threonine 35, serine 39, and threonine 40. A Mg(2+)-binding site is contributed by threonine 22. 2 short sequence motifs (switch) span residues 31 to 45 (DAFN…GIDF) and 63 to 80 (DTAG…YYRG). The Mg(2+) site is built by threonine 40 and aspartate 63. Glycine 66 is a GTP binding site. At threonine 72 the chain carries Phosphothreonine. 5 residues coordinate GTP: asparagine 121, lysine 122, aspartate 124, alanine 152, and lysine 153. Serine 180 and serine 183 each carry phosphoserine. Cysteine 204 carries the cysteine methyl ester modification. Residue cysteine 204 is the site of S-geranylgeranyl cysteine attachment. The propeptide at 205-207 (LLL) is removed in mature form.

The protein belongs to the small GTPase superfamily. Rab family. Associated with actin, delta-catenin and alpha and beta tubulins. Interacts with OTOF. Interacts with PEX5R. Interacts with RAB3IP. Interacts with VIM. Interacts with CDH1. Interacts with MICALL2. Interacts with GDI1, GDI2, CHML and CHM; phosphorylation at Thr-72 disrupts these interactions. Interacts with MICAL1. Mg(2+) is required as a cofactor. Post-translationally, phosphorylation of Thr-72 in the switch II region by LRRK2 prevents the association of RAB regulatory proteins, including CHM, CHML and RAB GDP dissociation inhibitors GDI1 and GDI2.

The protein localises to the cell membrane. Its subcellular location is the cytoplasmic vesicle. It is found in the phagosome membrane. The protein resides in the endosome membrane. It catalyses the reaction GTP + H2O = GDP + phosphate + H(+). Regulated by guanine nucleotide exchange factors (GEFs) including RAB3IP/RABIN8 which promotes the exchange of bound GDP for free GTP. Regulated by GTPase activating proteins (GAPs) which increase the GTP hydrolysis activity. Inhibited by GDP dissociation inhibitors (GDIs). In terms of biological role, the small GTPases Rab are key regulators of intracellular membrane trafficking, from the formation of transport vesicles to their fusion with membranes. Rabs cycle between an inactive GDP-bound form and an active GTP-bound form that is able to recruit to membranes different sets of downstream effectors directly responsible for vesicle formation, movement, tethering and fusion. RAB8B may be involved in polarized vesicular trafficking and neurotransmitter release. May participate in cell junction dynamics in Sertoli cells. May also participate in the export of a subset of neosynthesized proteins through a Rab8-Rab10-Rab11-dependent endososomal export route. This is Ras-related protein Rab-8B (RAB8B) from Bos taurus (Bovine).